The primary structure comprises 187 residues: Cerebral dopamine neurotrophic factor (187 aa).

Residues 1–24 (MRCISPTALVTFCAGFCISNPVLA) form the signal peptide. 3 cysteine pairs are disulfide-bonded: Cys-37/Cys-124, Cys-40/Cys-113, and Cys-71/Cys-82.

The protein belongs to the ARMET family. In terms of tissue distribution, expressed at high levels in the heart, skeletal muscle, testis and brain (at protein level). In the brain, detected in the cerebral cortex neurons through layers II to VI. In the hippocampus, detected in the CA1 to CA3 pyramidal regions and in the granule and polymorph layers of dentate gyrus. Weak expression in the striatum. In substantia nigra, detected in solitary cells that did not express tyrosine hydroxylase, a marker for dopaminergic neurons. Relatively high expression in the Purkinje cells of the cerebellum and in regions of the brain stem, including the locus coeruleus.

It localises to the secreted. Its function is as follows. Trophic factor for dopamine neurons. Prevents the 6-hydroxydopamine (6-OHDA)-induced degeneration of dopaminergic neurons. When administered after 6-OHDA-lesioning, restores the dopaminergic function and prevents the degeneration of dopaminergic neurons in substantia nigra. In Mus musculus (Mouse), this protein is Cerebral dopamine neurotrophic factor (Cdnf).